The chain runs to 442 residues: tRNA-2-methylthio-N(6)-dimethylallyladenosine synthase (442 aa).

The MTTase N-terminal domain occupies 6–122 (RKFYIHTFGC…LPVLIAEAGK (117 aa)). 6 residues coordinate [4Fe-4S] cluster: C15, C51, C85, C157, C161, and C164. The Radical SAM core domain occupies 143 to 373 (RTQSLTAFVP…IDLQNGISAE (231 aa)). In terms of domain architecture, TRAM spans 376 to 439 (RLAIGSVVEV…SATLIGRAAE (64 aa)).

It belongs to the methylthiotransferase family. MiaB subfamily. In terms of assembly, monomer. [4Fe-4S] cluster serves as cofactor.

Its subcellular location is the cytoplasm. The enzyme catalyses N(6)-dimethylallyladenosine(37) in tRNA + (sulfur carrier)-SH + AH2 + 2 S-adenosyl-L-methionine = 2-methylsulfanyl-N(6)-dimethylallyladenosine(37) in tRNA + (sulfur carrier)-H + 5'-deoxyadenosine + L-methionine + A + S-adenosyl-L-homocysteine + 2 H(+). Its function is as follows. Catalyzes the methylthiolation of N6-(dimethylallyl)adenosine (i(6)A), leading to the formation of 2-methylthio-N6-(dimethylallyl)adenosine (ms(2)i(6)A) at position 37 in tRNAs that read codons beginning with uridine. In Chlorobium limicola (strain DSM 245 / NBRC 103803 / 6330), this protein is tRNA-2-methylthio-N(6)-dimethylallyladenosine synthase.